We begin with the raw amino-acid sequence, 139 residues long: MRIMGLDVGSKTVGVAISDPLGFTAQGLEIIKIDEEKAEFGFTRLEELVKQYQVEQFVIGLPKNMNNTNGPRVDASITYGSHIEHLFGLPVHYQDERLTTVEAERMLIEQADISRGKRKKVIDKLAAQLILQNYLNRNF.

The protein belongs to the YqgF nuclease family.

Its subcellular location is the cytoplasm. Functionally, could be a nuclease involved in processing of the 5'-end of pre-16S rRNA. The protein is Putative pre-16S rRNA nuclease of Streptococcus pyogenes serotype M49 (strain NZ131).